The following is a 726-amino-acid chain: Mitotic spindle checkpoint protein MAD1 (726 aa).

A disordered region spans residues Met1–Gln30. Coiled coils occupy residues Ala68 to Ile246 and Ser272 to Asp625.

This sequence belongs to the MAD1 family. As to quaternary structure, homodimer. Part of the mitotic checkpoint complex (MCC). Interacts with MAD2 and NUA.

The protein localises to the nucleus envelope. In terms of biological role, required for the execution of the mitotic checkpoint which monitors the process of kinetochore-spindle attachment and delays the onset of anaphase when this process is not complete. It inhibits the activity of the anaphase promoting complex by sequestering CDC20 until all chromosomes are aligned at the metaphase plate. Required for anchoring MAD2 to the nuclear envelope. The polypeptide is Mitotic spindle checkpoint protein MAD1 (Arabidopsis thaliana (Mouse-ear cress)).